The primary structure comprises 285 residues: Bifunctional protein FolD (285 aa).

NADP(+) is bound by residues 166-168 and Ile-232; that span reads GAS.

The protein belongs to the tetrahydrofolate dehydrogenase/cyclohydrolase family. Homodimer.

The enzyme catalyses (6R)-5,10-methylene-5,6,7,8-tetrahydrofolate + NADP(+) = (6R)-5,10-methenyltetrahydrofolate + NADPH. It carries out the reaction (6R)-5,10-methenyltetrahydrofolate + H2O = (6R)-10-formyltetrahydrofolate + H(+). The protein operates within one-carbon metabolism; tetrahydrofolate interconversion. Catalyzes the oxidation of 5,10-methylenetetrahydrofolate to 5,10-methenyltetrahydrofolate and then the hydrolysis of 5,10-methenyltetrahydrofolate to 10-formyltetrahydrofolate. The sequence is that of Bifunctional protein FolD from Buchnera aphidicola subsp. Schizaphis graminum (strain Sg).